Consider the following 391-residue polypeptide: Na(+)/H(+) antiporter NhaA 2 (391 aa).

Helical transmembrane passes span 25–45 (AGGIVLMAAALAALIVANSPL), 56–76 (VWLGLSVELWINDGLMAIFFL), 98–118 (ALPGFAALGGMLVPALIYIAI), 128–148 (GWAIPAATDIAFALGVLSLLG), 157–177 (VFLAALAILDDLGAVTIIAFF), 180–200 (SGLNLPMLAAAFVTLAVLVAL), 208–228 (LLPYLLLGALLWFFVLQSGVH), 264–284 (VAFAVVPIFGFANAGVSLSGI), 297–317 (VALGLFVGKQIGVFLAAVLAI), 335–355 (GVAILCGIGFTMSLFIGNLAF), and 364–384 (EVKVGVLIGSGLAAVAGIVLL).

It belongs to the NhaA Na(+)/H(+) (TC 2.A.33) antiporter family.

The protein resides in the cell inner membrane. The enzyme catalyses Na(+)(in) + 2 H(+)(out) = Na(+)(out) + 2 H(+)(in). Its function is as follows. Na(+)/H(+) antiporter that extrudes sodium in exchange for external protons. This Pseudomonas syringae pv. tomato (strain ATCC BAA-871 / DC3000) protein is Na(+)/H(+) antiporter NhaA 2.